We begin with the raw amino-acid sequence, 419 residues long: Serine hydroxymethyltransferase (419 aa).

(6S)-5,6,7,8-tetrahydrofolate is bound by residues leucine 121 and 125–127 (GHL). An N6-(pyridoxal phosphate)lysine modification is found at lysine 230. 355–357 (SPF) lines the (6S)-5,6,7,8-tetrahydrofolate pocket.

This sequence belongs to the SHMT family. Homodimer. Pyridoxal 5'-phosphate serves as cofactor.

The protein localises to the cytoplasm. The catalysed reaction is (6R)-5,10-methylene-5,6,7,8-tetrahydrofolate + glycine + H2O = (6S)-5,6,7,8-tetrahydrofolate + L-serine. It participates in one-carbon metabolism; tetrahydrofolate interconversion. It functions in the pathway amino-acid biosynthesis; glycine biosynthesis; glycine from L-serine: step 1/1. Functionally, catalyzes the reversible interconversion of serine and glycine with tetrahydrofolate (THF) serving as the one-carbon carrier. This reaction serves as the major source of one-carbon groups required for the biosynthesis of purines, thymidylate, methionine, and other important biomolecules. Also exhibits THF-independent aldolase activity toward beta-hydroxyamino acids, producing glycine and aldehydes, via a retro-aldol mechanism. This chain is Serine hydroxymethyltransferase, found in Alkalilimnicola ehrlichii (strain ATCC BAA-1101 / DSM 17681 / MLHE-1).